Consider the following 176-residue polypeptide: Small ribosomal subunit protein uS5 (176 aa).

The region spanning 11–74 (LSEVLVDVNR…QAAKKRMMKV (64 aa)) is the S5 DRBM domain.

This sequence belongs to the universal ribosomal protein uS5 family. As to quaternary structure, part of the 30S ribosomal subunit. Contacts proteins S4 and S8.

With S4 and S12 plays an important role in translational accuracy. Its function is as follows. Located at the back of the 30S subunit body where it stabilizes the conformation of the head with respect to the body. This is Small ribosomal subunit protein uS5 from Rickettsia rickettsii (strain Iowa).